A 92-amino-acid chain; its full sequence is DNA/RNA-binding protein Alba (92 aa).

Lys11 bears the N6-acetyllysine mark.

It belongs to the histone-like Alba family. Post-translationally, acetylated. Acetylation at Lys-11 decreases DNA-binding affinity.

It is found in the cytoplasm. The protein localises to the chromosome. Functionally, binds double-stranded DNA tightly but without sequence specificity. Involved in DNA compaction. This chain is DNA/RNA-binding protein Alba, found in Pyrobaculum calidifontis (strain DSM 21063 / JCM 11548 / VA1).